A 368-amino-acid polypeptide reads, in one-letter code: Chorismate synthase (368 aa).

NADP(+) contacts are provided by Arg48 and Arg54. FMN is bound by residues 131–133, 243–244, Gly292, 307–311, and Arg333; these read RSS, NA, and KPTSS.

This sequence belongs to the chorismate synthase family. Homotetramer. The cofactor is FMNH2.

The enzyme catalyses 5-O-(1-carboxyvinyl)-3-phosphoshikimate = chorismate + phosphate. The protein operates within metabolic intermediate biosynthesis; chorismate biosynthesis; chorismate from D-erythrose 4-phosphate and phosphoenolpyruvate: step 7/7. Functionally, catalyzes the anti-1,4-elimination of the C-3 phosphate and the C-6 proR hydrogen from 5-enolpyruvylshikimate-3-phosphate (EPSP) to yield chorismate, which is the branch point compound that serves as the starting substrate for the three terminal pathways of aromatic amino acid biosynthesis. This reaction introduces a second double bond into the aromatic ring system. This is Chorismate synthase from Nitrobacter winogradskyi (strain ATCC 25391 / DSM 10237 / CIP 104748 / NCIMB 11846 / Nb-255).